The following is a 133-amino-acid chain: p53 and DNA damage-regulated protein 1 (133 aa).

It belongs to the prefoldin subunit beta family. Component of the PAQosome complex which is responsible for the biogenesis of several protein complexes and which consists of R2TP complex members RUVBL1, RUVBL2, RPAP3 and PIH1D1, URI complex members PFDN2, PFDN6, PDRG1, UXT and URI1 as well as ASDURF, POLR2E and DNAAF10/WDR92.

The protein localises to the cytoplasm. Its function is as follows. May play a role in chaperone-mediated protein folding. This chain is p53 and DNA damage-regulated protein 1 (Pdrg1), found in Rattus norvegicus (Rat).